A 67-amino-acid chain; its full sequence is Moricin (67 aa).

The first 23 residues, 1 to 23 (MKLTSLFIFVIVALSLLFSSTDA), serve as a signal peptide directing secretion.

It belongs to the moricin family. Monomer.

The protein localises to the secreted. Its function is as follows. Antimicrobial peptide. Active against a broad spectrum of Gram-positive and Gram-negative bacteria including methicillin-resistant S.aureus ATCC 43 300, S.aureus BAA-39, pathogenic strains of L.monocytogenes, K.pneumoniae, E.coli O157:H7, S.typhimurium and multidrug-resistant S.typhimurium DT104 with minimum inhibitory concentration (MIC) of 1.4 uM for all except for S.aureus BAA-39. Also active against Serratia marcescens. Probably acts by disturbing membrane functions with its amphipathic alpha-helical structure. May protect a developing embryo from bacterial infection. This is Moricin from Manduca sexta (Tobacco hawkmoth).